Consider the following 249-residue polypeptide: Ubiquinone biosynthesis O-methyltransferase (249 aa).

Residues Met1–Lys23 form a disordered region. S-adenosyl-L-methionine contacts are provided by Arg52, Gly71, Asp92, and Met136.

This sequence belongs to the methyltransferase superfamily. UbiG/COQ3 family.

The catalysed reaction is a 3-demethylubiquinol + S-adenosyl-L-methionine = a ubiquinol + S-adenosyl-L-homocysteine + H(+). It catalyses the reaction a 3-(all-trans-polyprenyl)benzene-1,2-diol + S-adenosyl-L-methionine = a 2-methoxy-6-(all-trans-polyprenyl)phenol + S-adenosyl-L-homocysteine + H(+). It participates in cofactor biosynthesis; ubiquinone biosynthesis. Its function is as follows. O-methyltransferase that catalyzes the 2 O-methylation steps in the ubiquinone biosynthetic pathway. The sequence is that of Ubiquinone biosynthesis O-methyltransferase from Cupriavidus pinatubonensis (strain JMP 134 / LMG 1197) (Cupriavidus necator (strain JMP 134)).